Here is a 340-residue protein sequence, read N- to C-terminus: UDP-N-acetylglucosamine--N-acetylmuramyl-(pentapeptide) pyrophosphoryl-undecaprenol N-acetylglucosamine transferase (340 aa).

UDP-N-acetyl-alpha-D-glucosamine is bound by residues 10-12 (TGG), Asn-124, Ser-179, and Gln-277.

This sequence belongs to the glycosyltransferase 28 family. MurG subfamily.

It is found in the cell inner membrane. The enzyme catalyses di-trans,octa-cis-undecaprenyl diphospho-N-acetyl-alpha-D-muramoyl-L-alanyl-D-glutamyl-meso-2,6-diaminopimeloyl-D-alanyl-D-alanine + UDP-N-acetyl-alpha-D-glucosamine = di-trans,octa-cis-undecaprenyl diphospho-[N-acetyl-alpha-D-glucosaminyl-(1-&gt;4)]-N-acetyl-alpha-D-muramoyl-L-alanyl-D-glutamyl-meso-2,6-diaminopimeloyl-D-alanyl-D-alanine + UDP + H(+). Its pathway is cell wall biogenesis; peptidoglycan biosynthesis. Functionally, cell wall formation. Catalyzes the transfer of a GlcNAc subunit on undecaprenyl-pyrophosphoryl-MurNAc-pentapeptide (lipid intermediate I) to form undecaprenyl-pyrophosphoryl-MurNAc-(pentapeptide)GlcNAc (lipid intermediate II). In Sulfurimonas denitrificans (strain ATCC 33889 / DSM 1251) (Thiomicrospira denitrificans (strain ATCC 33889 / DSM 1251)), this protein is UDP-N-acetylglucosamine--N-acetylmuramyl-(pentapeptide) pyrophosphoryl-undecaprenol N-acetylglucosamine transferase.